A 1411-amino-acid chain; its full sequence is Regulating synaptic membrane exocytosis protein 2 (1411 aa).

Residues 1–33 (MSAPVGPRGRLAPIPAASQPPLQPEMPDLSHLT) are disordered. A RabBD domain is found at 26-185 (MPDLSHLTEE…TKSGAWFYNS (160 aa)). The FYVE-type zinc finger occupies 117-173 (KGDAPTCGICHKTKFADGCGHNCSYCQTKFCARCGGRVSLRSNKVMWVCNLCRKQQE). 8 residues coordinate Zn(2+): Cys-123, Cys-126, Cys-139, Cys-142, Cys-147, Cys-150, Cys-165, and Cys-168. 6 stretches are compositionally biased toward basic and acidic residues: residues 203 to 216 (NEEA…KLHE), 273 to 287 (DQNR…REEY), 318 to 329 (DSDHLSYRDSNR), 348 to 366 (RDEY…RYRS), 382 to 401 (EQMR…RHSD), and 410 to 434 (EDSR…RRAA). 2 disordered regions span residues 203-598 (NEEA…SERQ) and 623-650 (SGVD…WQPS). Position 400 is a phosphoserine (Ser-400). A compositionally biased stretch (polar residues) spans 451–463 (GPSSYAQRTTNHS). A compositionally biased stretch (basic and acidic residues) spans 475–492 (DRPDLRRTDSLRKQHHLD). Residues 510–521 (RNDSLSSDQSES) show a composition bias toward polar residues. The span at 528-537 (KPHKSKKGGK) shows a compositional bias: basic residues. Over residues 558–568 (SCDDVEIESES) the composition is skewed to acidic residues. Basic and acidic residues-rich tracts occupy residues 569-583 (VSEK…RKTS) and 634-644 (NEEHSHSDKHP). Residues 668–754 (DGSVPRDSGA…EPQVELVVSR (87 aa)) enclose the PDZ domain. The residue at position 689 (Thr-689) is a Phosphothreonine. The interval 762-793 (IPDSTHAQLESSSSSFESQKMDRPSISVTSPM) is disordered. 2 positions are modified to phosphoserine: Ser-791 and Ser-794. The region spanning 805 to 928 (LSGQLSIKLW…ALLDDEPHWY (124 aa)) is the C2 1 domain. Disordered stretches follow at residues 939–973 (PLPH…SEVS) and 993–1190 (DLQS…STET). Polar residues-rich tracts occupy residues 994 to 1015 (LQSS…SPSG) and 1049 to 1059 (RTMTGHYNTIS). A compositionally biased stretch (basic and acidic residues) spans 1060–1113 (RMDRHRVMDDHYSPDRDRDCEAADRQPYHRSRSTEQRPLLERTTTRSRSTERPD). Positions 1143–1153 (GSVQTSPSSTP) are enriched in polar residues. Phosphoserine is present on Ser-1148. Residues 1257–1375 (AMGDIQVGMM…ELSNMVIGWF (119 aa)) enclose the C2 2 domain. Ser-1396 and Ser-1399 each carry phosphoserine.

As to quaternary structure, interacts with RAB3A and RAB3B that have been activated by GTP-binding. Interacts with RAB3C, RAB3D and RAB26. Interacts with TSPOAP1 and RIMBP2. Interacts with PPFIA3 and PPFIA4. Interacts via its zinc finger with the first C2 domain of UNC13A. Forms a complex consisting of UNC13A, RIMS2 and RAB3A. Heterodimer with PCLO. Part of a ternary complex involving PCLO and EPAC2. As to expression, widely expressed. Expressed in melanocytes. In fetal tissues, predominantly expressed in the brain. In the retina, expressed in the outer plexiform layer (at protein level). In the cerebellum, expressed in Purkinje cells (at protein level). In the pancreas, expressed in Langerhans islets (at protein level).

Its subcellular location is the cell membrane. The protein localises to the synapse. It is found in the presynaptic cell membrane. Rab effector involved in exocytosis. May act as scaffold protein. Plays a role in dendrite formation by melanocytes. The chain is Regulating synaptic membrane exocytosis protein 2 (RIMS2) from Homo sapiens (Human).